The primary structure comprises 173 residues: Glycine cleavage system H protein, mitochondrial (173 aa).

Residues 1–48 (MALRVVRSVRALLCTLRAVPSPAAPCPPRPWQLGVGAVRTLRTGPALL) constitute a mitochondrion transit peptide. The Lipoyl-binding domain occupies 66–148 (IGTVGISNFA…YEDGWLIKMT (83 aa)). Position 107 is an N6-lipoyllysine (lysine 107).

This sequence belongs to the GcvH family. Interacts with GLDC. The glycine cleavage system is composed of four proteins: P (GLDC), T (GCST), L (DLD) and H (GCSH). Requires (R)-lipoate as cofactor.

It is found in the mitochondrion. Its function is as follows. The glycine cleavage system catalyzes the degradation of glycine. The H protein (GCSH) shuttles the methylamine group of glycine from the P protein (GLDC) to the T protein (GCST). Has a pivotal role in the lipoylation of enzymes involved in cellular energetics such as the mitochondrial dihydrolipoyllysine-residue acetyltransferase component of pyruvate dehydrogenase complex (DLAT), and the mitochondrial dihydrolipoyllysine-residue succinyltransferase component of 2-oxoglutarate dehydrogenase complex (DLST). The protein is Glycine cleavage system H protein, mitochondrial of Homo sapiens (Human).